The chain runs to 1254 residues: Structural polyprotein (1254 aa).

Positions 1-33 (MFPYQPMYPMQPMPFRNPFAAPRRPWFPRTDPF) are necessary for nucleocapsid assembly and virus assembly. The interval 33-68 (FLAMQVQELARSMANLTFKQRRDVPPEGPPAKKKKK) is host transcription inhibition. The Supraphysiological nuclear export signal motif lies at 41-48 (LARSMANL). Residues 48–119 (LTFKQRRDVP…KPGKRQRMVM (72 aa)) are disordered. The Nuclear localization signal signature appears at 64-68 (KKKKK). 2 stretches are compositionally biased toward basic residues: residues 79-93 (NGKKKNKLVKKKKKT) and 102-117 (GGKKKVNKKPGKRQRM). Positions 91 to 126 (KKTGPPPQKTNGGKKKVNKKPGKRQRMVMKLESDKT) are binding to the viral RNA. Position 93 is a phosphothreonine (Thr-93). Positions 111-125 (PGKRQRMVMKLESDK) are ribosome-binding. At Ser-123 the chain carries Phosphoserine. The 150-residue stretch at 125–274 (KTFPIMLDGR…KYTPENSEQW (150 aa)) folds into the Peptidase S3 domain. Phosphothreonine is present on Thr-126. Residue His-151 is the Charge relay system of the active site. The tract at residues 167–172 (KKASKY) is interaction with spike glycoprotein E2. Residues Asp-173 and Ser-225 each act as charge relay system in the active site. The segment at 259–263 (EKGVT) is interaction with spike glycoprotein E2. Positions 275–286 (SLVTTMCLLANV) are functions as an uncleaved signal peptide for the precursor of protein E3/E2. Residues 275 to 700 (SLVTTMCLLA…HYYHRYPMST (426 aa)) lie on the Extracellular side of the membrane. 7 disulfide bridges follow: Cys-281/Cys-290, Cys-352/Cys-456, Cys-355/Cys-360, Cys-423/Cys-437, Cys-484/Cys-599, Cys-533/Cys-559, and Cys-535/Cys-553. N-linked (GlcNAc...) asparagine; by host glycosylation is present at Asn-285. An N-linked (GlcNAc...) asparagine; by host glycan is attached at Asn-651. A helical transmembrane segment spans residues 701–721 (ILGLSICAAIVTTSIAASVWL). Topologically, residues 722 to 756 (FCKSRISCLTPYRLTPNARMPLCLAVLCCARTARA) are cytoplasmic. An interaction with the capsid protein region spans residues 724 to 728 (KSRIS). 3 S-palmitoyl cysteine; by host lipidation sites follow: Cys-729, Cys-749, and Cys-750. The segment at 729 to 749 (CLTPYRLTPNARMPLCLAVLC) is transient transmembrane before p62-6K protein processing. Cys-729 and Cys-750 are joined by a disulfide. Residues 757 to 771 (ETTWESLDHLWNHNQ) are Extracellular-facing. 2 consecutive transmembrane segments (helical) span residues 772 to 790 (QMFWSQLLIPLAALIVATR) and 791 to 811 (LLKCVCCVVPFLVVAGAVGAG). Topologically, residues 812-1224 (AYEHATTMPN…SKTAWTWLTS (413 aa)) are extracellular. Cystine bridges form between Cys-861–Cys-926, Cys-874–Cys-906, Cys-875–Cys-908, and Cys-880–Cys-890. The tract at residues 896–913 (VYPFMWGGAYCFCDTENT) is E1 fusion peptide loop. 2 N-linked (GlcNAc...) asparagine; by host glycosylation sites follow: Asn-946 and Asn-1082. Cystine bridges form between Cys-1071–Cys-1083, Cys-1113–Cys-1188, Cys-1118–Cys-1192, and Cys-1140–Cys-1182. The helical transmembrane segment at 1225 to 1245 (LLGGSAIIIIIGLVLATIVAM) threads the bilayer. The Cytoplasmic segment spans residues 1246 to 1254 (YVLTNQKHN).

Homodimer. Homomultimer. Interacts with host karyopherin KPNA4; this interaction allows the nuclear import of the viral capsid protein. Interacts with spike glycoprotein E2. Interacts with host IRAK1; the interaction leads to inhibition of IRAK1-dependent signaling. Part of a tetrameric complex composed of host CRM1, host importin alpha/beta dimer and the viral capsid; this complex blocks the receptor-mediated transport through the nuclear pore. Interacts with host phosphatase PPP1CA; this interaction dephosphorylates the capsid protein, which increases its ability to bind to the viral genome. As to quaternary structure, the precursor of protein E3/E2 and E1 form a heterodimer shortly after synthesis. In terms of assembly, interacts with spike glycoprotein E2. The precursor of protein E3/E2 and E1 form a heterodimer shortly after synthesis. Processing of the precursor of protein E3/E2 into E2 and E3 results in a heterodimer of the spike glycoproteins E2 and E1. Spike at virion surface are constituted of three E2-E1 heterodimers. After target cell attachment and endocytosis, E1 change conformation to form homotrimers. Interacts with 6K protein. Interacts with host LDLRAD3; this interaction mediates viral entry to the host cell. Interacts with spike glycoprotein E1. Processing of the precursor of protein E3/E2 into E2 and E3 results in a heterodimer of the spike glycoproteins E2 and E1. Spike at virion surface are constituted of a trimer of E2-E1 heterodimers. Interacts with 6K protein. Interacts with host LDLRAD3; this interaction mediates viral entry to the host cell. As to quaternary structure, oligomer. Interacts with spike glycoprotein E1. Interacts with spike glycoprotein E2. In terms of processing, structural polyprotein: Specific enzymatic cleavages in vivo yield mature proteins. Capsid protein is auto-cleaved during polyprotein translation, unmasking a signal peptide at the N-terminus of the precursor of E3/E2. The remaining polyprotein is then targeted to the host endoplasmic reticulum, where host signal peptidase cleaves it into pE2, 6K and E1 proteins. pE2 is further processed to mature E3 and E2 by host furin in trans-Golgi vesicle. Post-translationally, phosphorylated on serine and threonine residues. Palmitoylated via thioester bonds. These palmitoylations may induce disruption of the C-terminus transmembrane. This would result in the reorientation of E2 C-terminus from lumenal to cytoplasmic side. In terms of processing, N-glycosylated. Post-translationally, palmitoylated via thioester bonds.

It localises to the virion. It is found in the host cytoplasm. The protein localises to the host cell membrane. Its subcellular location is the host nucleus. The protein resides in the virion membrane. It localises to the host Golgi apparatus. It is found in the host trans-Golgi network. The protein localises to the host endoplasmic reticulum. It catalyses the reaction Autocatalytic release of the core protein from the N-terminus of the togavirus structural polyprotein by hydrolysis of a -Trp-|-Ser- bond.. Its function is as follows. Forms an icosahedral capsid with a T=4 symmetry composed of 240 copies of the capsid protein surrounded by a lipid membrane through which penetrate 80 spikes composed of trimers of E1-E2 heterodimers. The capsid protein binds to the viral RNA genome at a site adjacent to a ribosome binding site for viral genome translation following genome release. Possesses a protease activity that results in its autocatalytic cleavage from the nascent structural protein. Following its self-cleavage, the capsid protein transiently associates with ribosomes, and within several minutes the protein binds to viral RNA and rapidly assembles into icosahedric core particles. The resulting nucleocapsid eventually associates with the cytoplasmic domain of the spike glycoprotein E2 at the cell membrane, leading to budding and formation of mature virions. In case of infection, new virions attach to target cells and after clathrin-mediated endocytosis their membrane fuses with the host endosomal membrane. This leads to the release of the nucleocapsid into the cytoplasm, followed by an uncoating event necessary for the genomic RNA to become accessible. The uncoating might be triggered by the interaction of capsid proteins with ribosomes. Binding of ribosomes would release the genomic RNA since the same region is genomic RNA-binding and ribosome-binding. Specifically inhibits interleukin-1 receptor-associated kinase 1/IRAK1-dependent signaling during viral entry, representing a means by which the alphaviruses may evade innate immune detection and activation prior to viral gene expression. Inhibits host transcription. Forms a tetrameric complex with XPO1/CRM1 and the nuclear import receptor importin. This complex blocks the central channel of host nuclear pores thereby inhibiting the receptor-mediated nuclear transport and thus the host mRNA and rRNA transcription. The inhibition of transcription is linked to a cytopathic effect on the host cell. In terms of biological role, provides the signal sequence for the translocation of the precursor of protein E3/E2 to the host endoplasmic reticulum. Furin-cleaved E3 remains associated with spike glycoprotein E1 and mediates pH protection of the latter during the transport via the secretory pathway. After virion release from the host cell, the assembly protein E3 is gradually released in the extracellular space. Plays a role in viral attachment to target host cell, by binding to the cell receptor LDLRAD3. Synthesized as a p62 precursor which is processed by furin at the cell membrane just before virion budding, giving rise to E2-E1 heterodimer. The p62-E1 heterodimer is stable, whereas E2-E1 is unstable and dissociate at low pH. p62 is processed at the last step, presumably to avoid E1 fusion activation before its final export to cell surface. E2 C-terminus contains a transitory transmembrane that would be disrupted by palmitoylation, resulting in reorientation of the C-terminal tail from lumenal to cytoplasmic side. This step is critical since E2 C-terminus is involved in budding by interacting with capsid proteins. This release of E2 C-terminus in cytoplasm occurs lately in protein export, and precludes premature assembly of particles at the endoplasmic reticulum membrane. Functionally, acts as a viroporin that participates in virus glycoprotein processing and transport to the plasma membrane, cell permeabilization and budding of viral particles. Disrupts the calcium homeostasis of the cell, probably at the endoplasmic reticulum level. This leads to cytoplasmic calcium elevation. Because of its lipophilic properties, the 6K protein is postulated to influence the selection of lipids that interact with the transmembrane domains of the glycoproteins, which, in turn, affects the deformability of the bilayer required for the extreme curvature that occurs as budding proceeds. Present in low amount in virions, about 3% compared to viral glycoproteins. Its function is as follows. Class II viral fusion protein. Fusion activity is inactive as long as E1 is bound to E2 in mature virion. After virus attachment to cell receptor LDLRAD3 and endocytosis, acidification of the endosome induce dissociation of E1/E2 heterodimer and concomitant trimerization of the E1 subunits. This E1 trimer is fusion active, and promotes release of viral nucleocapsid in cytoplasm after endosome and viral membrane fusion. Efficient fusion requires the presence of cholesterol and sphingolipid in the target membrane. The sequence is that of Structural polyprotein from Venezuelan equine encephalitis virus (strain Mena II) (VEEV).